The chain runs to 312 residues: DNA-directed RNA polymerase subunit alpha (312 aa).

The tract at residues 1–229 (MLQYQIDRIE…ELFQPLATVT (229 aa)) is alpha N-terminal domain (alpha-NTD). Residues 246–312 (IPLEELNLSV…ISIPQSRTSA (67 aa)) form an alpha C-terminal domain (alpha-CTD) region.

Belongs to the RNA polymerase alpha chain family. As to quaternary structure, in cyanobacteria the RNAP catalytic core is composed of 2 alpha, 1 beta, 1 beta', 1 gamma and 1 omega subunit. When a sigma factor is associated with the core the holoenzyme is formed, which can initiate transcription.

The enzyme catalyses RNA(n) + a ribonucleoside 5'-triphosphate = RNA(n+1) + diphosphate. DNA-dependent RNA polymerase catalyzes the transcription of DNA into RNA using the four ribonucleoside triphosphates as substrates. The chain is DNA-directed RNA polymerase subunit alpha from Prochlorococcus marinus (strain SARG / CCMP1375 / SS120).